The sequence spans 491 residues: Ribulose-1,5 bisphosphate carboxylase/oxygenase large subunit N-methyltransferase, chloroplastic (491 aa).

The SET domain occupies 67–291 (EGVVTTKTPV…AGDQLFIQYD (225 aa)).

It belongs to the class V-like SAM-binding methyltransferase superfamily. Plant protein-lysine LSMT methyltransferase family.

Its subcellular location is the plastid. The protein resides in the chloroplast. It catalyses the reaction L-lysyl-[ribulose-1,5-bisphosphate carboxylase] + 3 S-adenosyl-L-methionine = N(6),N(6),N(6)-trimethyl-L-lysyl-[ribulose-1,5-bisphosphate carboxylase] + 3 S-adenosyl-L-homocysteine + 3 H(+). In terms of biological role, methylates 'Lys-14' of the large subunit of RuBisCO. In Nicotiana tabacum (Common tobacco), this protein is Ribulose-1,5 bisphosphate carboxylase/oxygenase large subunit N-methyltransferase, chloroplastic (RBCMT).